A 361-amino-acid polypeptide reads, in one-letter code: Phospho-N-acetylmuramoyl-pentapeptide-transferase (361 aa).

The next 10 membrane-spanning stretches (helical) occupy residues 25-45, 73-93, 98-118, 139-159, 168-188, 200-220, 237-257, 264-284, 289-309, and 339-359; these read RGILAALTALFLSLWMGPAVI, TMGGSLILLTVTLSVLLWGDL, VWLVLAVMICFGAIGWYDDWI, IFGLAAGLFLYYTADVPAAIT, IALPLAGVSFVVIAYFWIVGF, GLAIMPTVLVACALGVFAYAS, AGELIIICSAIAGAGLGFLWF, VFMGDIGALSLGAVLGTIAVI, MVLVIMGGVFVIETLSVIIQV, and VIVRFWIISVVLVLIGLATLK.

This sequence belongs to the glycosyltransferase 4 family. MraY subfamily. Mg(2+) is required as a cofactor.

Its subcellular location is the cell inner membrane. The enzyme catalyses UDP-N-acetyl-alpha-D-muramoyl-L-alanyl-gamma-D-glutamyl-meso-2,6-diaminopimeloyl-D-alanyl-D-alanine + di-trans,octa-cis-undecaprenyl phosphate = di-trans,octa-cis-undecaprenyl diphospho-N-acetyl-alpha-D-muramoyl-L-alanyl-D-glutamyl-meso-2,6-diaminopimeloyl-D-alanyl-D-alanine + UMP. Its pathway is cell wall biogenesis; peptidoglycan biosynthesis. Its function is as follows. Catalyzes the initial step of the lipid cycle reactions in the biosynthesis of the cell wall peptidoglycan: transfers peptidoglycan precursor phospho-MurNAc-pentapeptide from UDP-MurNAc-pentapeptide onto the lipid carrier undecaprenyl phosphate, yielding undecaprenyl-pyrophosphoryl-MurNAc-pentapeptide, known as lipid I. The sequence is that of Phospho-N-acetylmuramoyl-pentapeptide-transferase from Xanthomonas oryzae pv. oryzae (strain PXO99A).